The chain runs to 142 residues: ATP synthase epsilon chain (142 aa).

The protein belongs to the ATPase epsilon chain family. In terms of assembly, F-type ATPases have 2 components, CF(1) - the catalytic core - and CF(0) - the membrane proton channel. CF(1) has five subunits: alpha(3), beta(3), gamma(1), delta(1), epsilon(1). CF(0) has three main subunits: a, b and c.

Its subcellular location is the cell inner membrane. In terms of biological role, produces ATP from ADP in the presence of a proton gradient across the membrane. This is ATP synthase epsilon chain from Mannheimia succiniciproducens (strain KCTC 0769BP / MBEL55E).